Here is a 229-residue protein sequence, read N- to C-terminus: Enolase-phosphatase E1 (229 aa).

It belongs to the HAD-like hydrolase superfamily. MasA/MtnC family. Monomer. Mg(2+) serves as cofactor.

The catalysed reaction is 5-methylsulfanyl-2,3-dioxopentyl phosphate + H2O = 1,2-dihydroxy-5-(methylsulfanyl)pent-1-en-3-one + phosphate. It participates in amino-acid biosynthesis; L-methionine biosynthesis via salvage pathway; L-methionine from S-methyl-5-thio-alpha-D-ribose 1-phosphate: step 3/6. It functions in the pathway amino-acid biosynthesis; L-methionine biosynthesis via salvage pathway; L-methionine from S-methyl-5-thio-alpha-D-ribose 1-phosphate: step 4/6. Functionally, bifunctional enzyme that catalyzes the enolization of 2,3-diketo-5-methylthiopentyl-1-phosphate (DK-MTP-1-P) into the intermediate 2-hydroxy-3-keto-5-methylthiopentenyl-1-phosphate (HK-MTPenyl-1-P), which is then dephosphorylated to form the acireductone 1,2-dihydroxy-3-keto-5-methylthiopentene (DHK-MTPene). The sequence is that of Enolase-phosphatase E1 from Yersinia enterocolitica serotype O:8 / biotype 1B (strain NCTC 13174 / 8081).